Reading from the N-terminus, the 148-residue chain is Large ribosomal subunit protein uL15A (148 aa).

Basic residues-rich tracts occupy residues 1-13 (MPTH…KLRG) and 21-31 (RIGKHRKHPGG). Residues 1 to 36 (MPTHVSKTRKLRGHVSAGHGRIGKHRKHPGGRGKAG) form a disordered region.

The protein belongs to the universal ribosomal protein uL15 family. As to quaternary structure, component of the large ribosomal subunit (LSU). Mature yeast ribosomes consist of a small (40S) and a large (60S) subunit. The 40S small subunit contains 1 molecule of ribosomal RNA (18S rRNA) and at least 33 different proteins. The large 60S subunit contains 3 rRNA molecules (25S, 5.8S and 5S rRNA) and at least 46 different proteins.

Its subcellular location is the cytoplasm. In terms of biological role, component of the ribosome, a large ribonucleoprotein complex responsible for the synthesis of proteins in the cell. The small ribosomal subunit (SSU) binds messenger RNAs (mRNAs) and translates the encoded message by selecting cognate aminoacyl-transfer RNA (tRNA) molecules. The large subunit (LSU) contains the ribosomal catalytic site termed the peptidyl transferase center (PTC), which catalyzes the formation of peptide bonds, thereby polymerizing the amino acids delivered by tRNAs into a polypeptide chain. The nascent polypeptides leave the ribosome through a tunnel in the LSU and interact with protein factors that function in enzymatic processing, targeting, and the membrane insertion of nascent chains at the exit of the ribosomal tunnel. The polypeptide is Large ribosomal subunit protein uL15A (rpl2802) (Schizosaccharomyces pombe (strain 972 / ATCC 24843) (Fission yeast)).